A 146-amino-acid polypeptide reads, in one-letter code: Leghemoglobin 2 (146 aa).

A Globin domain is found at 2 to 146; that stretch reads GFTAQQDALV…LAAAIKKAMS (145 aa). Tyrosine 30 carries the nitrated tyrosine modification. Serine 45 lines the heme b pocket. At serine 45 the chain carries Phosphoserine. Histidine 61 is a binding site for O2. Heme b-binding residues include lysine 64, histidine 93, and lysine 96. Tyrosine 134 is modified (nitrated tyrosine).

The protein belongs to the plant globin family. In terms of assembly, monomer. In terms of processing, nitrated in effective nodules and particularly in hypoxic conditions; this mechanism may play a protective role in the symbiosis by buffering toxic peroxynitrite NO(2)(-). Nitration level decrease during nodule senescence. Post-translationally, phosphorylation at Ser-45 disrupts the molecular environment of its porphyrin ring oxygen binding pocket, thus leading to a reduced oxygen consumption and to the delivery of oxygen O(2) to symbiosomes. As to expression, specifically and strongly expressed in root nodules and at low levels in seedlings.

It localises to the cytoplasm. Its subcellular location is the cytosol. The protein localises to the nucleus. Its function is as follows. Leghemoglobin that reversibly binds oxygen O(2) through a pentacoordinated heme iron. In root nodules, facilitates the diffusion of oxygen to the bacteroids while preventing the bacterial nitrogenase from being inactivated by buffering dioxygen, nitric oxide and carbon monoxide, and promoting the formation of reactive oxygen species (ROS, e.g. H(2)O(2)). This role is essential for symbiotic nitrogen fixation (SNF). The chain is Leghemoglobin 2 from Lotus japonicus (Lotus corniculatus var. japonicus).